A 140-amino-acid chain; its full sequence is Large ribosomal subunit protein uL3 (140 aa).

It belongs to the universal ribosomal protein uL3 family. In terms of assembly, part of the 50S ribosomal subunit. Forms a cluster with proteins L14 and L19.

One of the primary rRNA binding proteins, it binds directly near the 3'-end of the 23S rRNA, where it nucleates assembly of the 50S subunit. The sequence is that of Large ribosomal subunit protein uL3 (rplC) from Planobispora rosea.